The primary structure comprises 225 residues: 7-carboxy-7-deazaguanine synthase (225 aa).

Residues 12–14 (IQG) and Arg27 contribute to the substrate site. The Radical SAM core domain occupies 18-225 (YIGVRQLFVR…PQVHKYLGVR (208 aa)). Cys31, Cys35, and Cys38 together coordinate [4Fe-4S] cluster. Thr40 contacts Mg(2+). Thr80 is a binding site for substrate. An S-adenosyl-L-methionine-binding site is contributed by Gly82.

This sequence belongs to the radical SAM superfamily. 7-carboxy-7-deazaguanine synthase family. As to quaternary structure, homodimer. It depends on [4Fe-4S] cluster as a cofactor. The cofactor is S-adenosyl-L-methionine. Mg(2+) serves as cofactor.

It carries out the reaction 6-carboxy-5,6,7,8-tetrahydropterin + H(+) = 7-carboxy-7-deazaguanine + NH4(+). The protein operates within purine metabolism; 7-cyano-7-deazaguanine biosynthesis. Its function is as follows. Catalyzes the complex heterocyclic radical-mediated conversion of 6-carboxy-5,6,7,8-tetrahydropterin (CPH4) to 7-carboxy-7-deazaguanine (CDG), a step common to the biosynthetic pathways of all 7-deazapurine-containing compounds. The sequence is that of 7-carboxy-7-deazaguanine synthase from Archaeoglobus fulgidus (strain ATCC 49558 / DSM 4304 / JCM 9628 / NBRC 100126 / VC-16).